A 52-amino-acid polypeptide reads, in one-letter code: uncharacterized protein (52 aa).

Residues 7–27 form a helical membrane-spanning segment; it reads MFQLFVFIIFAAVVFAAVTGF.

It is found in the membrane. This is an uncharacterized protein from Bacillus subtilis (strain 168).